Here is a 346-residue protein sequence, read N- to C-terminus: UPF0283 membrane protein VIBHAR_01918 (346 aa).

A compositionally biased stretch (basic and acidic residues) spans 1–17 (MSELKQKQVFKEKVMHS). The interval 1-28 (MSELKQKQVFKEKVMHSEEEDVSPELNT) is disordered. Helical transmembrane passes span 73–93 (LFAT…ITAI) and 98–118 (WLAL…LGAL).

It belongs to the UPF0283 family.

It localises to the cell inner membrane. The protein is UPF0283 membrane protein VIBHAR_01918 of Vibrio campbellii (strain ATCC BAA-1116).